Consider the following 98-residue polypeptide: Transcription elongation factor A protein-like 7 (98 aa).

Residues 1 to 22 (MQKSCNEKEGKPKGSEAKREDE) show a composition bias toward basic and acidic residues. The interval 1–33 (MQKSCNEKEGKPKGSEAKREDEQPCGALEGQRL) is disordered. Positions 59 to 89 (GEEMTGEEEEMERCLEEIRSLRKKFRALHSN) form a coiled coil.

It belongs to the TFS-II family. TFA subfamily.

Its subcellular location is the nucleus. Functionally, plays a role in the negative regulation of NF-kappa-B signaling at the basal level by modulating transcriptional activity of NF-kappa-B on its target gene promoters. Associates with cyclin D1 promoter containing Myc E-box sequence and transcriptionally represses cyclin D1 expression. Regulates telomerase reverse transcriptase expression and telomerase activity in both ALT (alternative lengthening of telomeres)and telomerase-positive cell lines. In Mus musculus (Mouse), this protein is Transcription elongation factor A protein-like 7 (Tceal7).